The following is a 352-amino-acid chain: tRNA N6-adenosine threonylcarbamoyltransferase (352 aa).

His111 and His115 together coordinate Fe cation. Residues 133–137 (LASGG), Asp166, Gly179, and Asn275 each bind substrate. Asp300 contacts Fe cation.

This sequence belongs to the KAE1 / TsaD family. The cofactor is Fe(2+).

The protein resides in the cytoplasm. It catalyses the reaction L-threonylcarbamoyladenylate + adenosine(37) in tRNA = N(6)-L-threonylcarbamoyladenosine(37) in tRNA + AMP + H(+). Required for the formation of a threonylcarbamoyl group on adenosine at position 37 (t(6)A37) in tRNAs that read codons beginning with adenine. Is involved in the transfer of the threonylcarbamoyl moiety of threonylcarbamoyl-AMP (TC-AMP) to the N6 group of A37, together with TsaE and TsaB. TsaD likely plays a direct catalytic role in this reaction. The protein is tRNA N6-adenosine threonylcarbamoyltransferase of Treponema pallidum (strain Nichols).